Reading from the N-terminus, the 213-residue chain is Pyridoxine/pyridoxamine 5'-phosphate oxidase (213 aa).

Substrate contacts are provided by residues 9–12 and lysine 67; that span reads RKSY. FMN is bound by residues 62–67, 77–78, arginine 83, and lysine 84; these read RVVLIK and YT. Residues tyrosine 124, arginine 128, and serine 132 each contribute to the substrate site. Residues 141–142 and tryptophan 185 each bind FMN; that span reads QS. Residue 191-193 coordinates substrate; it reads RLH. Arginine 195 lines the FMN pocket.

The protein belongs to the pyridoxamine 5'-phosphate oxidase family. In terms of assembly, homodimer. FMN is required as a cofactor.

The enzyme catalyses pyridoxamine 5'-phosphate + O2 + H2O = pyridoxal 5'-phosphate + H2O2 + NH4(+). It catalyses the reaction pyridoxine 5'-phosphate + O2 = pyridoxal 5'-phosphate + H2O2. It participates in cofactor metabolism; pyridoxal 5'-phosphate salvage; pyridoxal 5'-phosphate from pyridoxamine 5'-phosphate: step 1/1. Its pathway is cofactor metabolism; pyridoxal 5'-phosphate salvage; pyridoxal 5'-phosphate from pyridoxine 5'-phosphate: step 1/1. Functionally, catalyzes the oxidation of either pyridoxine 5'-phosphate (PNP) or pyridoxamine 5'-phosphate (PMP) into pyridoxal 5'-phosphate (PLP). The protein is Pyridoxine/pyridoxamine 5'-phosphate oxidase of Methylibium petroleiphilum (strain ATCC BAA-1232 / LMG 22953 / PM1).